The sequence spans 219 residues: Histone H1.11R (219 aa).

2 stretches are compositionally biased toward low complexity: residues 1–20 and 28–40; these read MAET…AAKA and AAGG…PAGP. Disordered regions lie at residues 1-42 and 89-219; these read MAET…GPSV and LVSK…AKKK. The 74-residue stretch at 38–111 folds into the H15 domain; it reads AGPSVTELIT…GASGSFRLSK (74 aa). Basic residues-rich tracts occupy residues 121-135, 143-160, 168-183, and 192-219; these read PKKK…KAAA, KKPK…KAKK, KSVK…KKAV, and KAVK…AKKK.

It belongs to the histone H1/H5 family.

It localises to the nucleus. The protein localises to the chromosome. Functionally, histones H1 are necessary for the condensation of nucleosome chains into higher-order structures. The polypeptide is Histone H1.11R (Gallus gallus (Chicken)).